The sequence spans 420 residues: Protein disulfide isomerase CRELD1 (420 aa).

Residues 1-29 (MAPWPPKGLVPAMLWGLSLFLNLPGPIWL) form the signal peptide. Topologically, residues 30-362 (QPSPPPQSSP…GFFSEMTEDE (333 aa)) are extracellular. The CXXC signature appears at 46–49 (CHTC). C46 and C49 are oxidised to a cystine. N-linked (GlcNAc...) asparagine glycosylation is present at N79. The EGF-like 1 domain maps to 153-193 (LPCPGGTERPCGGYGQCEGEGTRGGSGHCDCQAGYGGEACG). 3 cysteine pairs are disulfide-bonded: C155-C169, C163-C181, and C183-C192. N-linked (GlcNAc...) asparagine glycosylation is present at N205. FU repeat units lie at residues 208–256 (HLVC…GANC) and 268–315 (SYEC…EVCP). The CXXC motif lies at 278-281 (CLGC). Intrachain disulfides connect C278–C281, C309–C321, C314–C330, and C332–C343. Residues 305 to 344 (DVDECETEVCPGENKQCENTEGGYRCICAEGYKQMEGICV) enclose the EGF-like 2; calcium-binding domain. The chain crosses the membrane as a helical span at residues 363 to 383 (LVVLQQMFFGIIICALATLAA). K384 is a topological domain (cytoplasmic). A helical transmembrane segment spans residues 385 to 405 (GDLVFTAIFIGAVAAMTGYWL). The Extracellular segment spans residues 406 to 420 (SERSDRVLEGFIKGR).

This sequence belongs to the CRELD family. Highly expressed in fetal lung, liver, kidney, adult heart, brain and skeletal muscle. Weakly expressed in placenta, fetal brain, and adult lung, liver, kidney and pancreas.

Its subcellular location is the membrane. The enzyme catalyses Catalyzes the rearrangement of -S-S- bonds in proteins.. Its function is as follows. Protein disulfide isomerase. Promotes the localization of acetylcholine receptors (AChRs) to the plasma membrane. The protein is Protein disulfide isomerase CRELD1 (CRELD1) of Homo sapiens (Human).